Consider the following 307-residue polypeptide: 2-dehydropantoate 2-reductase (307 aa).

NADP(+) is bound by residues 7-12, Asn-102, and Ala-128; that span reads GSGAMG. Asn-102 contributes to the substrate binding site. Lys-184 serves as the catalytic Proton donor. Residues Asn-188, Asn-192, and Ser-255 each contribute to the substrate site. Glu-268 contacts NADP(+).

The protein belongs to the ketopantoate reductase family.

It localises to the cytoplasm. The enzyme catalyses (R)-pantoate + NADP(+) = 2-dehydropantoate + NADPH + H(+). It participates in cofactor biosynthesis; (R)-pantothenate biosynthesis; (R)-pantoate from 3-methyl-2-oxobutanoate: step 2/2. Its function is as follows. Catalyzes the NADPH-dependent reduction of ketopantoate into pantoic acid. In Streptococcus pyogenes serotype M6 (strain ATCC BAA-946 / MGAS10394), this protein is 2-dehydropantoate 2-reductase (apbA).